The primary structure comprises 141 residues: Large ribosomal subunit protein uL11 (141 aa).

Belongs to the universal ribosomal protein uL11 family. Part of the ribosomal stalk of the 50S ribosomal subunit. Interacts with L10 and the large rRNA to form the base of the stalk. L10 forms an elongated spine to which L12 dimers bind in a sequential fashion forming a multimeric L10(L12)X complex. Post-translationally, one or more lysine residues are methylated.

Its function is as follows. Forms part of the ribosomal stalk which helps the ribosome interact with GTP-bound translation factors. The sequence is that of Large ribosomal subunit protein uL11 from Carboxydothermus hydrogenoformans (strain ATCC BAA-161 / DSM 6008 / Z-2901).